A 521-amino-acid polypeptide reads, in one-letter code: MSFSRSEAAPAAPLPDLAATLAALRDDAFQQLGAAFVTRLPAAPLPAPYVVGFSDDAARMLGLEPALRDAPGFAELFCGNPTRDWPQASLPYASVYSGHQFGVWAGQLGDGRALTIGELAHDGRRYELQLKGAGRTPYSRMGDGRAVLRSSIREFLCSEAMHHLGIPTTRALAVIGSDQPVVREEIETSAVVTRVAQSFVRFGHFEHFFANDRPEQLRALADHVIERFYPACRDADDPYLALLAEATRRTAELVAQWQAVGFCHGVMNTDNMSILGLTIDYGPFGFIDAFDAKHVCNHSDTQGRYAYRMQPRIAHWNCFCLAQALLPLIGLHRDAPSEDARAERAVEDAHAVLGRFPEQFGPALERAIRAKLGLALEREGDAALANQLLEIMDASHADFTLTFRHLARVSKHDARGDAPVRDLFIDRDAFDRWANLYRARLSEEARDDASRAAAMNRVNPKYVLRNHLAETAIRRAKEKDFSEVERLAAVLRRPFDEQPEHDAYAALPPDWASTLEVSCSS.

G109, G111, R112, K131, D143, G144, R194, and R201 together coordinate ATP. Residue D270 is the Proton acceptor of the active site. Mg(2+) is bound by residues N271 and D280. D280 lines the ATP pocket.

It belongs to the SELO family. The cofactor is Mg(2+). Mn(2+) serves as cofactor.

The enzyme catalyses L-seryl-[protein] + ATP = 3-O-(5'-adenylyl)-L-seryl-[protein] + diphosphate. It catalyses the reaction L-threonyl-[protein] + ATP = 3-O-(5'-adenylyl)-L-threonyl-[protein] + diphosphate. The catalysed reaction is L-tyrosyl-[protein] + ATP = O-(5'-adenylyl)-L-tyrosyl-[protein] + diphosphate. It carries out the reaction L-histidyl-[protein] + UTP = N(tele)-(5'-uridylyl)-L-histidyl-[protein] + diphosphate. The enzyme catalyses L-seryl-[protein] + UTP = O-(5'-uridylyl)-L-seryl-[protein] + diphosphate. It catalyses the reaction L-tyrosyl-[protein] + UTP = O-(5'-uridylyl)-L-tyrosyl-[protein] + diphosphate. Nucleotidyltransferase involved in the post-translational modification of proteins. It can catalyze the addition of adenosine monophosphate (AMP) or uridine monophosphate (UMP) to a protein, resulting in modifications known as AMPylation and UMPylation. The polypeptide is Protein nucleotidyltransferase YdiU (Burkholderia mallei (strain ATCC 23344)).